The following is a 1662-amino-acid chain: Cortactin-binding protein 2 (1662 aa).

Disordered stretches follow at residues 1-23 (MATD…AGAA), 202-235 (KKKT…EFDT), 365-439 (IGVS…LHPG), and 453-477 (GNAN…SPTS). Positions 118-275 (RKMQERMSAQ…EQLKRGSDSK (158 aa)) form a coiled coil. Over residues 385 to 395 (PSTGSTPDPTS) the composition is skewed to low complexity. The segment covering 404 to 421 (AAPSTAQTPGITPQNSQA) has biased composition (polar residues). At Arg497 the chain carries Asymmetric dimethylarginine. The interval 498 to 615 (FTGPQAGAPP…SSPQLPPKPS (118 aa)) is disordered. Composition is skewed to polar residues over residues 516–529 (DVST…TSVK) and 582–592 (TVASPPSSLPQ). 5 ANK repeats span residues 708-738 (GRPT…DINY), 742-771 (DGHS…QVNA), 775-804 (NGFT…NINH), 808-837 (GGQT…DRSV), and 841-870 (DGWT…PAHG). The segment at 871 to 897 (NSFSEEESESGVFDLDEGEESPEGKSK) is disordered. Over residues 874–891 (SEEESESGVFDLDEGEES) the composition is skewed to acidic residues. One copy of the ANK 6 repeat lies at 911 to 941 (EGWTAAHIAASKGFKNCLEILCRHGGLETER). The segment at 1446 to 1473 (KKKGESGAWRKVNTSPRRKSGRFSLPTW) is disordered. Position 1523 is a phosphoserine (Ser1523). The segment at 1614–1662 (VPRSKVTQCSQNTKRSSSSSNTRQIEINNNSKEENWNLHKNEHLEKPNK) is disordered. Over residues 1623-1637 (SQNTKRSSSSSNTRQ) the composition is skewed to low complexity. The segment covering 1644–1662 (SKEENWNLHKNEHLEKPNK) has biased composition (basic and acidic residues).

As to quaternary structure, interacts with CTTN/cortactin SH3 domain. Interacts with STRN, STRN4/zinedin and MOB4/phocein; this interactions mediate the association with the STRIPAK core complex and may regulate dendritic spine distribution of the STRIPAK complex in hippocampal neurons. Activation of glutamate receptors weakens the interaction with STRN and STRN4.

Its subcellular location is the cytoplasm. The protein resides in the cell cortex. It is found in the cell projection. The protein localises to the dendritic spine. Its function is as follows. Regulates the dendritic spine distribution of CTTN/cortactin in hippocampal neurons, and thus controls dendritic spinogenesis and dendritic spine maintenance. Associates with the striatin-interacting phosphatase and kinase (STRIPAK) core complex to regulate dendritic spine distribution of the STRIPAK complex in hippocampal neurons. This is Cortactin-binding protein 2 (CTTNBP2) from Callithrix jacchus (White-tufted-ear marmoset).